Consider the following 473-residue polypeptide: ATP-dependent 6-phosphofructokinase 1 (473 aa).

Position 71 is a phosphoserine (Ser-71). ATP is bound by residues Gly-102, 165–166, and 190–193; these read RG and GDGS. Asp-191 contacts Mg(2+). Substrate contacts are provided by residues 219–221, 264–266, Glu-320, and 376–379; these read TID, MGR, and YMIR. Asp-221 acts as the Proton acceptor in catalysis.

The protein belongs to the phosphofructokinase type A (PFKA) family. PPi-dependent PFK group II subfamily. Atypical ATP-dependent clade 'X' sub-subfamily. Homotetramer. Requires Mg(2+) as cofactor. In terms of tissue distribution, expressed in roots, leaves, stems and flowers.

The protein resides in the cytoplasm. The enzyme catalyses beta-D-fructose 6-phosphate + ATP = beta-D-fructose 1,6-bisphosphate + ADP + H(+). Its pathway is carbohydrate degradation; glycolysis; D-glyceraldehyde 3-phosphate and glycerone phosphate from D-glucose: step 3/4. Its activity is regulated as follows. Allosterically activated by AMP. Its function is as follows. Catalyzes the phosphorylation of D-fructose 6-phosphate to fructose 1,6-bisphosphate by ATP, the first committing step of glycolysis. The protein is ATP-dependent 6-phosphofructokinase 1 of Arabidopsis thaliana (Mouse-ear cress).